The primary structure comprises 117 residues: Large ribosomal subunit protein eL30B (117 aa).

Low complexity predominate over residues 1–14; it reads MSAAPTTAPVAAVS. Positions 1-22 are disordered; sequence MSAAPTTAPVAAVSKKGKKSGD.

Belongs to the eukaryotic ribosomal protein eL30 family. In terms of assembly, component of the large ribosomal subunit (LSU). Mature yeast ribosomes consist of a small (40S) and a large (60S) subunit. The 40S small subunit contains 1 molecule of ribosomal RNA (18S rRNA) and at least 33 different proteins. The large 60S subunit contains 3 rRNA molecules (25S, 5.8S and 5S rRNA) and at least 46 different proteins.

The protein resides in the cytoplasm. In terms of biological role, component of the ribosome, a large ribonucleoprotein complex responsible for the synthesis of proteins in the cell. The small ribosomal subunit (SSU) binds messenger RNAs (mRNAs) and translates the encoded message by selecting cognate aminoacyl-transfer RNA (tRNA) molecules. The large subunit (LSU) contains the ribosomal catalytic site termed the peptidyl transferase center (PTC), which catalyzes the formation of peptide bonds, thereby polymerizing the amino acids delivered by tRNAs into a polypeptide chain. The nascent polypeptides leave the ribosome through a tunnel in the LSU and interact with protein factors that function in enzymatic processing, targeting, and the membrane insertion of nascent chains at the exit of the ribosomal tunnel. This Schizosaccharomyces pombe (strain 972 / ATCC 24843) (Fission yeast) protein is Large ribosomal subunit protein eL30B (rpl3002).